Here is a 524-residue protein sequence, read N- to C-terminus: MRLDLLGPVATRIITYLDSLTWVGMALPLFSLCWAISYARGKAYPTVPGAPVYGYNSRFEPSFMLKSRTYTGFYDILSNGYKMLKDVPFVIPRHDTNINILPIKYLDEIRLMPKHILNSHLVLISQMTPKWTWLQPAADSDLVTRVLLTKLNPDLQKYVDITRLELDSAFKSDFPRHDEEWTEVDFQPLIRRVLTRISAKIFLGEPACLNEDWLRIAIGYTAGALEVTKDLHKFPSWTHFLVAPLLPSRRRLRRELDIAMKIVEKQIQLHEQAEKDGLKNYDTLLDWMLDNCSDKESSVEAMTIFQCFIAMASIHTTEFSLANVLFDLCAHPEWFPVLREELDEVIRVHGNIGHRLPAKQWLQKLEKMDSLLAETLRLCPTMLTSIQRLALEKVQLKDGTVIPKGSRLAWASLHHVTDPEVDGTLAAWDPMRNYRKRHSGSGENLTKFVAGQINESTLGFGYGNQACPGRYFAVNEIKMMLARLLLEFEFKFPEGKSRPKVFFIGEIACLDHDATLMMRNVRTC.

The chain crosses the membrane as a helical span at residues 13–36; it reads IITYLDSLTWVGMALPLFSLCWAI. 3 N-linked (GlcNAc...) asparagine glycosylation sites follow: asparagine 291, asparagine 444, and asparagine 454.

It belongs to the cytochrome P450 family. Requires heme as cofactor.

It is found in the membrane. The protein operates within mycotoxin biosynthesis. Cytochrome P450 monooxygenase; part of the core atranone cluster (CAC) which products are predicted to catalyze most or all steps of mycotoxin atranone synthesis, starting from geranylgeranyl pyrophosphate (GGPP). The initial cyclization of GGPP to dolabellane is probably performed by the terpene cyclase ATR13. The Baeyer-Villiger oxidation near the end of the atranone synthesis, which converts atranones D and E to atranones F and G is predicted to be catalyzed by the monooxygenase ATR8. Of the CAC's other predicted gene products, the reducing PKS ATR6 might synthesize a polyketide chain. This polyketide is probably transferred onto the atranone backbone by the polyketide transferase ATR5. Other predicted CAC products include 4 oxygenases (ATR2, ATR3, ATR4, and ATR14), 3 short-chain reductases (ATR7, ATR9, and ATR10), and a methyltransferase (ATR12). These may all be involved in the various steps of atranone biosynthesis, although their specific roles must await experimental determination. The protein is Cytochrome P450 monooxygenase ATR4 of Stachybotrys chlorohalonatus (strain IBT 40285).